The chain runs to 146 residues: Large ribosomal subunit protein uL23m (146 aa).

The disordered stretch occupies residues 108-138 (PDLFPEKDPRSPEPLEEELPQQRQSSDLRCP). Residues 111–120 (FPEKDPRSPE) are compositionally biased toward basic and acidic residues.

The protein belongs to the universal ribosomal protein uL23 family. As to quaternary structure, component of the mitochondrial ribosome large subunit (39S) which comprises a 16S rRNA and about 50 distinct proteins.

It localises to the mitochondrion. The protein is Large ribosomal subunit protein uL23m (Mrpl23) of Mus musculus (Mouse).